Consider the following 241-residue polypeptide: 2-C-methyl-D-erythritol 4-phosphate cytidylyltransferase (241 aa).

This sequence belongs to the IspD/TarI cytidylyltransferase family. IspD subfamily.

The catalysed reaction is 2-C-methyl-D-erythritol 4-phosphate + CTP + H(+) = 4-CDP-2-C-methyl-D-erythritol + diphosphate. Its pathway is isoprenoid biosynthesis; isopentenyl diphosphate biosynthesis via DXP pathway; isopentenyl diphosphate from 1-deoxy-D-xylulose 5-phosphate: step 2/6. Catalyzes the formation of 4-diphosphocytidyl-2-C-methyl-D-erythritol from CTP and 2-C-methyl-D-erythritol 4-phosphate (MEP). The sequence is that of 2-C-methyl-D-erythritol 4-phosphate cytidylyltransferase from Pseudoalteromonas translucida (strain TAC 125).